We begin with the raw amino-acid sequence, 357 residues long: UDP-N-acetylglucosamine--N-acetylmuramyl-(pentapeptide) pyrophosphoryl-undecaprenol N-acetylglucosamine transferase (357 aa).

UDP-N-acetyl-alpha-D-glucosamine contacts are provided by residues 14–16 (TAG), Arg-168, Ser-198, and Gln-292.

Belongs to the glycosyltransferase 28 family. MurG subfamily.

The protein resides in the cell membrane. The enzyme catalyses di-trans,octa-cis-undecaprenyl diphospho-N-acetyl-alpha-D-muramoyl-L-alanyl-D-glutamyl-meso-2,6-diaminopimeloyl-D-alanyl-D-alanine + UDP-N-acetyl-alpha-D-glucosamine = di-trans,octa-cis-undecaprenyl diphospho-[N-acetyl-alpha-D-glucosaminyl-(1-&gt;4)]-N-acetyl-alpha-D-muramoyl-L-alanyl-D-glutamyl-meso-2,6-diaminopimeloyl-D-alanyl-D-alanine + UDP + H(+). Its pathway is cell wall biogenesis; peptidoglycan biosynthesis. Its function is as follows. Cell wall formation. Catalyzes the transfer of a GlcNAc subunit on undecaprenyl-pyrophosphoryl-MurNAc-pentapeptide (lipid intermediate I) to form undecaprenyl-pyrophosphoryl-MurNAc-(pentapeptide)GlcNAc (lipid intermediate II). In Oceanobacillus iheyensis (strain DSM 14371 / CIP 107618 / JCM 11309 / KCTC 3954 / HTE831), this protein is UDP-N-acetylglucosamine--N-acetylmuramyl-(pentapeptide) pyrophosphoryl-undecaprenol N-acetylglucosamine transferase.